The chain runs to 526 residues: Peptide chain release factor 3 (526 aa).

The 269-residue stretch at 9-277 (DKRRTFAIIS…GIVEWAPKPQ (269 aa)) folds into the tr-type G domain. Residues 18 to 25 (SHPDAGKT), 86 to 90 (DTPGH), and 140 to 143 (NKLD) each bind GTP.

Belongs to the TRAFAC class translation factor GTPase superfamily. Classic translation factor GTPase family. PrfC subfamily.

The protein resides in the cytoplasm. Increases the formation of ribosomal termination complexes and stimulates activities of RF-1 and RF-2. It binds guanine nucleotides and has strong preference for UGA stop codons. It may interact directly with the ribosome. The stimulation of RF-1 and RF-2 is significantly reduced by GTP and GDP, but not by GMP. This is Peptide chain release factor 3 from Shewanella sediminis (strain HAW-EB3).